Reading from the N-terminus, the 691-residue chain is Elongation factor G (691 aa).

The tr-type G domain occupies glutamate 8–isoleucine 282. GTP is bound by residues alanine 17–threonine 24, aspartate 81–histidine 85, and asparagine 135–aspartate 138.

This sequence belongs to the TRAFAC class translation factor GTPase superfamily. Classic translation factor GTPase family. EF-G/EF-2 subfamily.

Its subcellular location is the cytoplasm. Catalyzes the GTP-dependent ribosomal translocation step during translation elongation. During this step, the ribosome changes from the pre-translocational (PRE) to the post-translocational (POST) state as the newly formed A-site-bound peptidyl-tRNA and P-site-bound deacylated tRNA move to the P and E sites, respectively. Catalyzes the coordinated movement of the two tRNA molecules, the mRNA and conformational changes in the ribosome. The protein is Elongation factor G of Prochlorococcus marinus (strain SARG / CCMP1375 / SS120).